Consider the following 251-residue polypeptide: Hydroxyacylglutathione hydrolase (251 aa).

Residues His-53, His-55, Asp-57, His-58, His-110, Asp-127, and His-165 each coordinate Zn(2+).

It belongs to the metallo-beta-lactamase superfamily. Glyoxalase II family. As to quaternary structure, monomer. It depends on Zn(2+) as a cofactor.

The enzyme catalyses an S-(2-hydroxyacyl)glutathione + H2O = a 2-hydroxy carboxylate + glutathione + H(+). Its pathway is secondary metabolite metabolism; methylglyoxal degradation; (R)-lactate from methylglyoxal: step 2/2. Thiolesterase that catalyzes the hydrolysis of S-D-lactoyl-glutathione to form glutathione and D-lactic acid. This is Hydroxyacylglutathione hydrolase from Pectobacterium atrosepticum (strain SCRI 1043 / ATCC BAA-672) (Erwinia carotovora subsp. atroseptica).